The chain runs to 291 residues: Methylsterol monooxygenase 1-3 (291 aa).

Transmembrane regions (helical) follow at residues 41–61, 92–112, and 114–134; these read TILVLFLVFSLAPFPLVIVEW, FLLVVGTLQIVSYPSIQMVGI, and SGLPLPSLMEIVAQLVVYFLI. A Fatty acid hydroxylase domain is found at 128–263; sequence LVVYFLIEDY…FTYCDYIYGT (136 aa). Positions 143 to 147 match the Histidine box-1 motif; sequence HRWMH. Residues 156-160 carry the Histidine box-2 motif; sequence HRIHH. A helical transmembrane segment spans residues 178 to 198; the sequence is ILILGIPTFLGPAIAPGHIMT. The short motif at 235 to 241 is the Histidine box-3 element; that stretch reads YHDYHHY.

This sequence belongs to the sterol desaturase family. In terms of assembly, interacts with ACBP1. Fe cation serves as cofactor. In terms of tissue distribution, expressed at low levels in leaves, roots, siliques and flowers.

It is found in the endoplasmic reticulum membrane. It carries out the reaction 4,4-dimethyl-5alpha-cholest-7-en-3beta-ol + 6 Fe(II)-[cytochrome b5] + 3 O2 + 5 H(+) = 4alpha-carboxy-4beta-methyl-5alpha-cholest-7-ene-3beta-ol + 6 Fe(III)-[cytochrome b5] + 4 H2O. The catalysed reaction is 24-methylidenelophenol + 6 Fe(II)-[cytochrome b5] + 3 O2 + 5 H(+) = 4alpha-carboxy-ergosta-7,24(24(1))-dien-3beta-ol + 6 Fe(III)-[cytochrome b5] + 4 H2O. Its function is as follows. Non-heme iron oxygenase involved in sterols biosynthesis by catalyzing the removal of the first methyl group at the C-4 position. 4,4-dimethyl-9-beta,19-cyclopropylsterols such as 24-methylenecycloartanol are the preferred substrates. The chain is Methylsterol monooxygenase 1-3 from Arabidopsis thaliana (Mouse-ear cress).